The chain runs to 484 residues: Aspartyl aminopeptidase (484 aa).

An N-acetylmethionine modification is found at methionine 1. Histidine 84 serves as a coordination point for Zn(2+). A substrate-binding site is contributed by histidine 159. The span at 188–206 shows a compositional bias: low complexity; that stretch reads PVESKSTTTTTTTESPKTS. Residues 188-213 form a disordered region; that stretch reads PVESKSTTTTTTTESPKTSDPQDVNS. Aspartate 266 lines the Zn(2+) pocket. Glutamate 301 lines the substrate pocket. The Zn(2+) site is built by glutamate 302 and aspartate 354. Substrate-binding residues include aspartate 354, histidine 357, lysine 382, and tyrosine 389. Histidine 448 contacts Zn(2+).

The protein belongs to the peptidase M18 family. As to quaternary structure, tetrahedron-shaped homododecamer built from six homodimers. Requires Zn(2+) as cofactor.

Its subcellular location is the cytoplasm. The catalysed reaction is Release of an N-terminal aspartate or glutamate from a peptide, with a preference for aspartate.. In terms of biological role, likely to play an important role in intracellular protein and peptide metabolism. In Dictyostelium discoideum (Social amoeba), this protein is Aspartyl aminopeptidase (dnpep).